Here is a 183-residue protein sequence, read N- to C-terminus: MEGVDVKAPRPGCGGDDGGAAAASLSARREEEEEGAVVGGEDEQVERFYALLANIRALRGMYSRYNGEEGAAGGDGDGASGRKRARRAEPPWRPAFRMEDFEFEEAAAGAGDDDAACSGRTTKKQRSGGGGHGAAVEKRRTEKEAAAAAAEDDDDEQEGGEVVEGKEEHRPGRRVEAHGPTDQ.

Disordered regions lie at residues 1–40 (MEGV…VVGG) and 66–183 (NGEE…PTDQ). Residues 31-40 (EEEEGAVVGG) show a composition bias toward acidic residues. Residues 70–79 (GAAGGDGDGA) are compositionally biased toward gly residues. Residues 101–115 (FEFEEAAAGAGDDDA) are compositionally biased toward acidic residues. Residues 135–145 (AVEKRRTEKEA) are compositionally biased toward basic and acidic residues. Over residues 150 to 161 (AEDDDDEQEGGE) the composition is skewed to acidic residues. Positions 163-183 (VEGKEEHRPGRRVEAHGPTDQ) are enriched in basic and acidic residues.

This sequence belongs to the NPR1-interactor family. As to quaternary structure, interacts with NPR1/NH1. Interacts with NPR3/NH3.

It is found in the nucleus. Functionally, binds to and represses NPR1/NH1-mediated transcriptional activation of LG2 in vitro. The sequence is that of NRR repressor homolog 1 from Oryza sativa subsp. japonica (Rice).